The sequence spans 1364 residues: Toxin subunit YenA2 (1364 aa).

Positions 1025-1080 (SESYRRRRQEWELQYKQAEWEVNSVEQQINLQNMQIKAANKRLEQVEAQQQQAMAL) form a coiled coil.

As to quaternary structure, semipurified toxin complex consists of at least YenA1-YenA2-YenB-YenC1-YenC2-Chi1-Chi2. The Yen-TC:K9 subcomplex is about 26 nm tall and 22 nm in diameter with 5-fold symmetry and 5 copies of YenA1, YenA2, Chi1 and Chi2; the chitinase subunits may be solvent accessible on the exterior the complex. The Yen-TC:K9 subcomplex has no insecticidal activity. The native complex with additional YenB, YenC1 and YenC2 subunits is 16 nm taller and is insecticidal; the toxicity-conferring subunits are present at about 1 copy each. The isolated toxin complex includes 3 peptides starting between residues 768 and 778 of this protein, which might be physiologically relevant.

The protein resides in the secreted. Part of an orally active toxin complex (TC) with strong insecticidal effects on larvae of the Coleoptera Costelytra zealandica, Acrossidius tasmania and Adoryphorus couloni and some Lepidoptera larvae. The TC has an endochitinase activity. The polypeptide is Toxin subunit YenA2 (Yersinia entomophaga).